The chain runs to 636 residues: Transcription termination factor FttA (636 aa).

Residues 4 to 72 form a KHa region; sequence ELELKRIRDE…VVFRWNVDKR (69 aa). A KHb region spans residues 73–140; sequence KDPAETKDYI…WQPKTIRTPP (68 aa). A metallo-beta-lactamase N-terminus region spans residues 181 to 383; sequence NIRMNALGGF…LLIEATYGGP (203 aa). His-242, His-244, Asp-246, His-247, His-329, and Asp-352 together coordinate Zn(2+). The tract at residues 384–577 is beta-Casp; it reads QDRIPSRQES…LKVFTLEGFS (194 aa). The segment at 578-636 is metallo-beta-lactamase C-terminus; sequence GHSSRSQISQFLRRIQPRPKVVIVNHGEESKCVSLSTMIHKKLRKSTKSPKNLEVVLLK. His-603 serves as a coordination point for Zn(2+).

This sequence belongs to the metallo-beta-lactamase superfamily. RNA-metabolizing metallo-beta-lactamase-like family. FttA subfamily. Homodimer. Interacts with RNA polymerase (RNAP), interacts with the Spt4-Spt5 complex. It depends on Zn(2+) as a cofactor.

Its function is as follows. Terminates transcription on the whole genome. Termination is linked to FttA-mediated RNA cleavage and does not require NTP hydrolysis. Cleaves endonucleolytically at the RNA exit channel of RNA polymerase (RNAP); the 5'-3' exonuclease activity of this protein degrades the nascent RNA released from RNAP. In terms of biological role, terminates transcription genome-wide in M.maripaludis. Restores wild-type growth to a strain of Methanococcus maripaludis depleted for this gene at 22 degrees Celsius and prevents transcriptional read-through. Transcription termination is most effective in vivo on RNAs with more than one U4-tract in their 3'-ends. Has endonuclease activity after U-rich tracts in transcription termination sequences. The polypeptide is Transcription termination factor FttA (Lokiarchaeum sp. (strain GC14_75)).